The following is a 347-amino-acid chain: GMP reductase (347 aa).

108-131 (ADFEKTKQILAQSPALNFVCIDVA) is an NADP(+) binding site. The K(+) site is built by G181 and G183. The active-site Thioimidate intermediate is the C186. 216–239 (IVSDGGCTMPGDVAKAFGGGADFV) contacts NADP(+).

Belongs to the IMPDH/GMPR family. GuaC type 1 subfamily. As to quaternary structure, homotetramer.

The catalysed reaction is IMP + NH4(+) + NADP(+) = GMP + NADPH + 2 H(+). Functionally, catalyzes the irreversible NADPH-dependent deamination of GMP to IMP. It functions in the conversion of nucleobase, nucleoside and nucleotide derivatives of G to A nucleotides, and in maintaining the intracellular balance of A and G nucleotides. The protein is GMP reductase of Citrobacter koseri (strain ATCC BAA-895 / CDC 4225-83 / SGSC4696).